A 225-amino-acid polypeptide reads, in one-letter code: ATP-dependent Clp protease proteolytic subunit (225 aa).

Residue Ser-123 is the Nucleophile of the active site. Residue His-148 is part of the active site.

The protein belongs to the peptidase S14 family. In terms of assembly, fourteen ClpP subunits assemble into 2 heptameric rings which stack back to back to give a disk-like structure with a central cavity, resembling the structure of eukaryotic proteasomes.

Its subcellular location is the cytoplasm. It carries out the reaction Hydrolysis of proteins to small peptides in the presence of ATP and magnesium. alpha-casein is the usual test substrate. In the absence of ATP, only oligopeptides shorter than five residues are hydrolyzed (such as succinyl-Leu-Tyr-|-NHMec, and Leu-Tyr-Leu-|-Tyr-Trp, in which cleavage of the -Tyr-|-Leu- and -Tyr-|-Trp bonds also occurs).. Cleaves peptides in various proteins in a process that requires ATP hydrolysis. Has a chymotrypsin-like activity. Plays a major role in the degradation of misfolded proteins. In Chlorobium phaeovibrioides (strain DSM 265 / 1930) (Prosthecochloris vibrioformis (strain DSM 265)), this protein is ATP-dependent Clp protease proteolytic subunit.